Consider the following 334-residue polypeptide: MNIGIVNDLPLAVEAMRRAIARRPEHRVLWVATDGAQAVELCAAQPPDVVLMDLIMPKFDGIEATRRIMRSERPCAILIVTSCIGANAWRVFEAMGAGALDAVDTPRLGDGAAGDTTKLLLAKIDQIGRLLDAPGGTRLAGTAARAGGGPLIAIGASAGGPGALASILGGLPADFSAPIVIVQHVDRAFAEGMAQWLDGQTPLAVRVAREGDRPQPGVALLAATDDHLRITRAGTLEYTREPAATPYRPSVDVFFNSLTEHWPGRVIGVLLTGMGRDGAIGLKALRMKGYHTIAQDEATSAVYGMPKAAATLGAARAILPLGRIAGELAALARI.

In terms of domain architecture, Response regulatory spans 2 to 120; the sequence is NIGIVNDLPL…GAAGDTTKLL (119 aa). D53 carries the 4-aspartylphosphate modification. One can recognise a CheB-type methylesterase domain in the interval 145 to 334; sequence RAGGGPLIAI…AGELAALARI (190 aa). Residues S157, H184, and D277 contribute to the active site.

Belongs to the CheB family. In terms of processing, phosphorylated by CheA. Phosphorylation of the N-terminal regulatory domain activates the methylesterase activity.

Its subcellular location is the cytoplasm. It carries out the reaction [protein]-L-glutamate 5-O-methyl ester + H2O = L-glutamyl-[protein] + methanol + H(+). The enzyme catalyses L-glutaminyl-[protein] + H2O = L-glutamyl-[protein] + NH4(+). Functionally, involved in chemotaxis. Part of a chemotaxis signal transduction system that modulates chemotaxis in response to various stimuli. Catalyzes the demethylation of specific methylglutamate residues introduced into the chemoreceptors (methyl-accepting chemotaxis proteins or MCP) by CheR. Also mediates the irreversible deamidation of specific glutamine residues to glutamic acid. This is Protein-glutamate methylesterase/protein-glutamine glutaminase 1 from Burkholderia lata (strain ATCC 17760 / DSM 23089 / LMG 22485 / NCIMB 9086 / R18194 / 383).